Consider the following 515-residue polypeptide: Putative cytochrome P450 CYP13A2 (515 aa).

Position 460 (Cys460) interacts with heme.

It belongs to the cytochrome P450 family. Requires heme as cofactor.

In terms of biological role, cytochromes P450 are a group of heme-thiolate monooxygenases. They oxidize a variety of structurally unrelated compounds, including steroids, fatty acids, and xenobiotics. In Caenorhabditis elegans, this protein is Putative cytochrome P450 CYP13A2 (cyp-13A2).